We begin with the raw amino-acid sequence, 455 residues long: Argininosuccinate lyase (455 aa).

This sequence belongs to the lyase 1 family. Argininosuccinate lyase subfamily.

It is found in the cytoplasm. It carries out the reaction 2-(N(omega)-L-arginino)succinate = fumarate + L-arginine. It functions in the pathway amino-acid biosynthesis; L-arginine biosynthesis; L-arginine from L-ornithine and carbamoyl phosphate: step 3/3. The chain is Argininosuccinate lyase from Shewanella sp. (strain MR-7).